Consider the following 325-residue polypeptide: Delta(1)-pyrroline-2-carboxylate reductase (325 aa).

The protein belongs to the ornithine cyclodeaminase/mu-crystallin family.

The enzyme catalyses L-proline + NAD(+) = 1-pyrroline-2-carboxylate + NADH + H(+). It carries out the reaction L-proline + NADP(+) = 1-pyrroline-2-carboxylate + NADPH + H(+). Its function is as follows. Catalyzes the reduction of Delta(1)-pyrroline-2-carboxylate (Pyr2C) to L-proline, using preferentially NADPH over NADH as the electron donor. Is likely involved in a degradation pathway that converts trans-3-hydroxy-L-proline (t3LHyp) to L-proline. This is Delta(1)-pyrroline-2-carboxylate reductase from Bacillus cereus (strain ATCC 10987 / NRS 248).